A 487-amino-acid chain; its full sequence is uncharacterized protein (487 aa).

3 disordered regions span residues 35–153 (VSRK…SGDQ), 237–345 (NTTK…AKAL), and 358–395 (QKRK…SSAA). The segment covering 54–96 (FDQEDILDTVPEQTDENEDEAGDDELESEKEELDYDEEEDDED) has biased composition (acidic residues). A compositionally biased stretch (basic and acidic residues) spans 97–132 (RRERTSRYTSEKKGSRKDSVEGDENKKENGQDETKR). Positions 241 to 253 (SKSRGRDTRKRRS) are enriched in basic residues. The span at 254 to 264 (SSYSSTSSSSD) shows a compositional bias: low complexity. Composition is skewed to basic and acidic residues over residues 273 to 338 (SRSD…KHSA) and 358 to 383 (QKRK…KKEV). The segment covering 385-395 (TTVSTNTSSAA) has biased composition (low complexity).

This is an uncharacterized protein from Caenorhabditis elegans.